We begin with the raw amino-acid sequence, 424 residues long: MAVEYVCCSPNFFIHIAVIVFLVLFAGLMSGLTLGLMSLSLVDLEVLAKSGTPEHRKYAAKILPVVKNQHLLLVTLLICNAAAMETLPIFLDGLVTAWGAILISVTLILLFGEIIPQSICSRYGLAIGATVAPFVRVLVFICLPVAWPISKLLDFLLGHRRAALFRRAELKTLVDFHGNEAGKGGELTHDETTIIAGALELSEKMVKDAMTPISDIFVIDINAKLDRDLMNLILEKGHSRVPVYYEQPTNIIGLVLVKNLLTINPDEEIPVKNVTIRRIPRVPEILPLYDILNEFQKGLSHMAVVVRQCDKIHPLPSKNGSVKEARVDVDSEGTPTPQERMLRTKRSLQKWKSFPNRASSFKGGSKSKKWSKDNDADILQLNGNPLPKLAEEEEAVGIITMEDVIEELLQEEIFDETDHHFEDS.

Residues 1–11 (MAVEYVCCSPN) lie on the Extracellular side of the membrane. The region spanning 8–191 (CSPNFFIHIA…GKGGELTHDE (184 aa)) is the CNNM transmembrane domain. Residues 12–32 (FFIHIAVIVFLVLFAGLMSGL) traverse the membrane as a helical segment. At 33–70 (TLGLMSLSLVDLEVLAKSGTPEHRKYAAKILPVVKNQH) the chain is on the cytoplasmic side. The chain crosses the membrane as a helical span at residues 71 to 91 (LLLVTLLICNAAAMETLPIFL). Residues 92–94 (DGL) lie on the Extracellular side of the membrane. A helical transmembrane segment spans residues 95 to 115 (VTAWGAILISVTLILLFGEII). Residues 116–136 (PQSICSRYGLAIGATVAPFVR) lie on the Cytoplasmic side of the membrane. The chain crosses the membrane as a helical span at residues 137-157 (VLVFICLPVAWPISKLLDFLL). The Extracellular segment spans residues 158-424 (GHRRAALFRR…DETDHHFEDS (267 aa)). A CBS 1 domain is found at 210–271 (MTPISDIFVI…TINPDEEIPV (62 aa)). N-linked (GlcNAc...) asparagine glycosylation is found at Asn-273 and Asn-319. 2 consecutive CBS domains span residues 275 to 331 (TIRR…DVDS) and 355 to 416 (PNRA…IFDE). Disordered stretches follow at residues 321 to 340 (SVKEARVDVDSEGTPTPQER) and 355 to 374 (PNRASSFKGGSKSKKWSKDN). The residue at position 331 (Ser-331) is a Phosphoserine.

The protein localises to the membrane. The sequence is that of DUF21 domain-containing protein At4g33700 (CBSDUF6) from Arabidopsis thaliana (Mouse-ear cress).